The primary structure comprises 395 residues: Guanine nucleotide-binding protein subunit beta-5 (395 aa).

WD repeat units follow at residues Gly-103 to Ala-142, Met-145 to Met-184, Met-193 to His-234, His-236 to Glu-278, Thr-279 to Ile-318, Ser-320 to Ile-362, and Gly-365 to Trp-394.

The protein belongs to the WD repeat G protein beta family. Component of a complex composed of RGS9 (isoform RGS9-1), GNB5 and RGS9BP; within this complex, the presence of GNB5 stabilizes both itself and RGS9 and increases RGS9 GTPase-activating protein (GAP) activity. Interacts with RGS7, forming the RGS7-GNB5 complex; within this complex, the presence of GNB5 increases RGS7 GTPase-activating protein (GAP) activity. Interacts with GPR158; promotes the GTPase activator activity of the RGS7-GNB5 complex in absence of glycine, in contrast GTPase activator activity of the RGS7-GNB5 complex is inhibited in presence of glycine. Interacts with RGS6. Widely expressed.

It localises to the membrane. Its function is as follows. Enhances GTPase-activating protein (GAP) activity of regulator of G protein signaling (RGS) proteins, such as RGS7 and RGS9, hence involved in the termination of the signaling initiated by the G protein coupled receptors (GPCRs) by accelerating the GTP hydrolysis on the G-alpha subunits, thereby promoting their inactivation. Increases RGS7 GTPase-activating protein (GAP) activity, thereby regulating mood and cognition. Increases RGS9 GTPase-activating protein (GAP) activity, hence contributes to the deactivation of G protein signaling initiated by D(2) dopamine receptors. May play an important role in neuronal signaling, including in the parasympathetic, but not sympathetic, control of heart rate. The polypeptide is Guanine nucleotide-binding protein subunit beta-5 (GNB5) (Homo sapiens (Human)).